The primary structure comprises 314 residues: uncharacterized protein (314 aa).

Positions 1–24 (MKRRRRWRGWLLFPALCFCLLCEA) are cleaved as a signal peptide. Asparagine 28, asparagine 43, asparagine 57, asparagine 77, asparagine 101, asparagine 102, asparagine 109, asparagine 151, asparagine 170, asparagine 217, asparagine 223, asparagine 252, asparagine 255, and asparagine 268 each carry an N-linked (GlcNAc...) asparagine; by host glycan. Over residues 47–114 (ATTGTTTTSP…TIGTNATSPS (68 aa)) the composition is skewed to low complexity. Positions 47-116 (ATTGTTTTSP…GTNATSPSPS (70 aa)) are disordered.

Belongs to the HHV-5 UL116 protein family. Interacts with gH. Interacts with UL148. Highly glycosylated.

It is found in the virion. The protein resides in the host endoplasmic reticulum. Chaperone protein that cooperates with UL148 to regulate the abundance of gH complexes in virion. First interactor of gH in the host endoplasmic reticulum, regulates the early folding steps of virion assembly. Then, UL148 is recruited and favors the binding of gL. This is an uncharacterized protein from Homo sapiens (Human).